The chain runs to 127 residues: MRHRKSGRQLNRNSSHRKAMFSNMASSLVRHEVIKTTLPKAKELRRVVEPLITLAKTDSVANRRLAFARTRDNEVVAKLFNELGPRFAARQGGYTRILKAGFRAGDKAPMAYIELVDRPAAEEAAAE.

The protein belongs to the bacterial ribosomal protein bL17 family. In terms of assembly, part of the 50S ribosomal subunit. Contacts protein L32.

The polypeptide is Large ribosomal subunit protein bL17 (Vibrio vulnificus (strain CMCP6)).